We begin with the raw amino-acid sequence, 327 residues long: Small ribosomal subunit protein RACK1z (327 aa).

WD repeat units follow at residues 13-44 (AHTD…ILWK), 61-91 (GHSH…RLWD), 103-133 (GHTK…KLWN), 148-180 (GHRD…KVWN), 192-222 (GHTG…LLWD), 233-262 (EANS…KIWD), and 293-323 (RKVI…RVWG).

The protein belongs to the WD repeat G protein beta family. Ribosomal protein RACK1 subfamily. Homodimer and heterodimer with RACK1B or RACK1C. Interacts with NUDT7. Interacts with GB1, MEKK1, MKK4, MKK5, MPK3 and MPK6, but not with GPA1 or MPK4. Interacts with OFUT20. In terms of tissue distribution, widely expressed.

The protein resides in the cytoplasm. It is found in the nucleus. Functionally, major component of the RACK1 regulatory proteins that play a role in multiple signal transduction pathways. Involved in multiple hormone responses and developmental processes. MAPK cascade scaffolding protein involved in the protease IV and ArgC signaling pathway but not the flg22 pathway. This is Small ribosomal subunit protein RACK1z from Arabidopsis thaliana (Mouse-ear cress).